The sequence spans 245 residues: Major prion protein (245 aa).

Positions 1–22 are cleaved as a signal peptide; that stretch reads MANLGCWMLVVFVATWSDLGLC. Positions 23-222 are interaction with GRB2, ERI3 and SYN1; that stretch reads KKRPKPGGWN…ESQAYYQRGS (200 aa). Residues 25–102 are disordered; that stretch reads RPKPGGWNTG…KPSKPKTSMK (78 aa). 4 repeat units span residues 51–59, 60–67, 68–75, and 76–83. The 4 X 8 AA tandem repeats of P-H-G-G-G-W-G-Q stretch occupies residues 51-83; that stretch reads PQGGGGWGQPHGGGWGQPHGGGWGQPHGGGWGQ. Gly residues predominate over residues 52 to 87; the sequence is QGGGGWGQPHGGGWGQPHGGGWGQPHGGGWGQGGGT. The Cu(2+) site is built by Gly-54, Gly-55, His-61, Gly-62, Gly-63, His-69, Gly-70, Gly-71, His-77, Gly-78, and Gly-79. Over residues 90-101 the composition is skewed to basic residues; it reads QWHKPSKPKTSM. The cysteines at positions 171 and 206 are disulfide-linked. Residues Asn-173 and Asn-189 are each glycosylated (N-linked (GlcNAc...) asparagine). The GPI-anchor amidated serine moiety is linked to residue Ser-222. Residues 223–245 constitute a propeptide, removed in mature form; that stretch reads SMVLFSSPPVILLISFLIFLIVG.

It belongs to the prion family. As to quaternary structure, monomer and homodimer. Has a tendency to aggregate into amyloid fibrils containing a cross-beta spine, formed by a steric zipper of superposed beta-strands. Soluble oligomers may represent an intermediate stage on the path to fibril formation. Copper binding may promote oligomerization. Interacts with GRB2, APP, ERI3/PRNPIP and SYN1. Mislocalized cytosolically exposed PrP interacts with MGRN1; this interaction alters MGRN1 subcellular location and causes lysosomal enlargement. Interacts with KIAA1191.

The protein resides in the cell membrane. Its subcellular location is the golgi apparatus. In terms of biological role, its primary physiological function is unclear. Has cytoprotective activity against internal or environmental stresses. May play a role in neuronal development and synaptic plasticity. May be required for neuronal myelin sheath maintenance. May play a role in iron uptake and iron homeostasis. Soluble oligomers are toxic to cultured neuroblastoma cells and induce apoptosis (in vitro). Association with GPC1 (via its heparan sulfate chains) targets PRNP to lipid rafts. Also provides Cu(2+) or Zn(2+) for the ascorbate-mediated GPC1 deaminase degradation of its heparan sulfate side chains. The polypeptide is Major prion protein (PRNP) (Cercopithecus diana (Diana monkey)).